Here is a 650-residue protein sequence, read N- to C-terminus: DNA mismatch repair protein MutL (650 aa).

Disordered stretches follow at residues 358 to 392 (EASQAALPVTPQPRPALTPGHPDPPPQAQLQQPLV) and 408 to 448 (QPRP…QSAA). Residues 367 to 384 (TPQPRPALTPGHPDPPPQ) are compositionally biased toward pro residues. The segment covering 430-444 (PYAPIAAAPVPASEP) has biased composition (low complexity).

The protein belongs to the DNA mismatch repair MutL/HexB family.

Functionally, this protein is involved in the repair of mismatches in DNA. It is required for dam-dependent methyl-directed DNA mismatch repair. May act as a 'molecular matchmaker', a protein that promotes the formation of a stable complex between two or more DNA-binding proteins in an ATP-dependent manner without itself being part of a final effector complex. The sequence is that of DNA mismatch repair protein MutL from Geobacter sp. (strain M21).